The following is a 107-amino-acid chain: uncharacterized protein (107 aa).

This is an uncharacterized protein from Homo sapiens (Human).